The following is a 474-amino-acid chain: Methylenetetrahydrofolate--tRNA-(uracil-5-)-methyltransferase TrmFO (474 aa).

13–18 contributes to the FAD binding site; sequence GGGLAG.

It belongs to the MnmG family. TrmFO subfamily. It depends on FAD as a cofactor.

The protein resides in the cytoplasm. It catalyses the reaction uridine(54) in tRNA + (6R)-5,10-methylene-5,6,7,8-tetrahydrofolate + NADH + H(+) = 5-methyluridine(54) in tRNA + (6S)-5,6,7,8-tetrahydrofolate + NAD(+). The enzyme catalyses uridine(54) in tRNA + (6R)-5,10-methylene-5,6,7,8-tetrahydrofolate + NADPH + H(+) = 5-methyluridine(54) in tRNA + (6S)-5,6,7,8-tetrahydrofolate + NADP(+). Functionally, catalyzes the folate-dependent formation of 5-methyl-uridine at position 54 (M-5-U54) in all tRNAs. The sequence is that of Methylenetetrahydrofolate--tRNA-(uracil-5-)-methyltransferase TrmFO from Bartonella tribocorum (strain CIP 105476 / IBS 506).